We begin with the raw amino-acid sequence, 449 residues long: Myb-related protein Pp1 (449 aa).

The region spanning 1–30 (LGNRWSAIAIPRRTDNEIKNYWNTHLKKRL) is the HTH myb-type domain. The H-T-H motif DNA-binding region spans 5–26 (WSAIAIPRRTDNEIKNYWNTHL).

The protein localises to the nucleus. Functionally, possible transcription activator. The protein is Myb-related protein Pp1 (PP1) of Physcomitrium patens (Spreading-leaved earth moss).